A 389-amino-acid chain; its full sequence is ELAV-like protein 2 (389 aa).

3 consecutive RRM domains span residues 66–145 (TNLI…YARP), 153–233 (ANLY…FANN), and 306–384 (WCIF…FKTS).

Belongs to the RRM elav family. In terms of assembly, part of a ribonucleoprotein (RNP) complex, at least composed of elavl1/elrA and/or elavl2/elrB, igf2bp3/vg1RBP, ddx6/Xp54, ybx2/frgy2, lsm14b/rap55b and, in a subset of RNP complexes, stau1/staufen. Binds RNA as a homooligomer. In terms of tissue distribution, expressed in brain, testis and ovary. Ovarian expression is restricted to follicle cells surrounding the oocyte. From the early tailbud stage, expression is neural-specific and is seen in both the central and peripheral nervous system in differentiating neurons but not proliferating precursors. Expressed in the retina from stage 32 with expression becoming restricted to the ganglion cell layer by later stages.

Its subcellular location is the cytoplasm. The protein localises to the cell cortex. Binds to poly-U elements and AU-rich elements (AREs) in the 3'-UTR of target mRNAs. Required for the vegetal localization of vg1 mRNA. Probably required for nervous system development. This is ELAV-like protein 2 (elavl2) from Xenopus laevis (African clawed frog).